The sequence spans 809 residues: MSGISLSLRQLDYRDWFQRKISRDIYGNSTWLTGIDLQKELTGHTGCVNTLDWSADGEFLLSGSDDTRLIVWDVFNEYKPRHLISTGHVQNIFSAKFVPYSNNRQILSASGDKLIKLFDLDSSKEGGMDHGMETQTRCWSCALDSVKNIVPCDNGHTFLVCSEDGTARQYDIREPHVCNQDLDCPSILVNYNPYRINLYTITMSPSNPYYFAIGGTHPYAFLYDRRMVKKSFRDDWTMNTSPEKDCRCVRKFSPDGSCNSQGILDRYITCCQFSAANPNELLVSWNSDYVYLFHVHEDKSYTPTFNKIEDSNKKPSKPSLLQTQPLKRKNYSPWYKNNFGASTPASRVSRNPYTAAQPRKHTFYQMYENIEKFFTTENGGLYESIVSGRLSHFSRSIQYVKDAIYFLENYNYIPDSNGLNHSIRVSALRYWRACVSILALMDDTVSLEPNTIIQAGWGWLYDFMNWVTRYLLGISDHWALQMSPPTNVARQNFVLCDPDEPSRVLFSNPSEMIRAFARIDTNDLSSVRRFFWIHKVLRGCLLLISSDIYWEQFQPWDSSTSDVTSSQRLDDENGFLTLLEPPVNYENEVESSSGENIVSMYTGHSDLNDDDDDYQDEESYSYASDDDDESDEDSDEGPTLLSLRMKKRKAVEPNVPVNTHVKSYYGHCNVESIKNVNFYGQNDEYVMSGSDDGRFFIWDKLNASILAIIHGDSEAVNVIEGHPRCPTLAVSGIDSTVKIFNTENTPPSGCSRNHTSNSYKIIATNEMNRQQGSRDSYITSRMLSHLAYRAHLDDGFGHEVLDTDACSIM.

WD repeat units follow at residues glycine 43–histidine 82, glycine 87–methionine 128, cysteine 141–glutamine 180, proline 193–arginine 233, and serine 241–valine 295. A disordered region spans residues serine 599–arginine 644. Residues asparagine 608–glutamate 636 are compositionally biased toward acidic residues. WD repeat units lie at residues cysteine 668–isoleucine 708 and glycine 711–cysteine 750.

In terms of assembly, interacts with ddb1.

The protein localises to the cytoplasm. In terms of biological role, ligand-dependent coactivator of nuclear receptors that may function as a substrate receptor for CUL4-DDB1 E3 ubiquitin-protein ligase complex. In Schizosaccharomyces pombe (strain 972 / ATCC 24843) (Fission yeast), this protein is WD repeat protein iqw1 (iqw1).